The sequence spans 103 residues: MYGDRYIDWDGAHVRTLFAPVTVYTRPGCKPCERVKDKLTAAGIDFDAVDVTANSEAYDYVTKVLNAMSVPVVVTDTHKPILGYQPDQLDELIDYYTASETGL.

Positions 9 to 103 (WDGAHVRTLF…DYYTASETGL (95 aa)) constitute a Glutaredoxin domain.

The chain is Gene 56 protein (56) from Mycobacterium phage L5 (Mycobacteriophage L5).